A 332-amino-acid polypeptide reads, in one-letter code: MENPANANPIRVGVIGCADIAWRRALPALEAEPLTEVTAIASRRWDRAKRFTERFGGEPVEGYPALLERDDVDAVYVPLPAVLHAEWIDRALRAGKHVLAEKPLTTDRPQAERLFAVARERGLLLMENFMFLHHPQHRQVADMLDEGVIGEIRSFAASFTIPPKPQGDIRYQADVGGGALLDIGVYPIRAAGLFLGADLEFVGAVLRHERDRDVVVGGNALLTTRQGVTAQLTFGMEHAYTNNYEFRGSTGRLWMNRVFTPPATYQPVVHIERQDHAEQFVLPAHDQFAKSIRAFAQAVLSGEHPREWSEDSLRQASLVDAVRTGARDIYFP.

17 to 23 is a binding site for NADP(+); that stretch reads CADIAWR. Arginine 24 contributes to the substrate binding site. NADP(+) contacts are provided by residues 42–43, tyrosine 63, leucine 79, and histidine 84; that span reads SR. The active-site Proton donor is the lysine 102. Arginine 170 and aspartate 182 together coordinate NADP(+). 2 residues coordinate substrate: tyrosine 240 and threonine 260.

This sequence belongs to the Gfo/Idh/MocA family. As to quaternary structure, homotetramer; dimer of dimers.

It carries out the reaction dTDP-4-dehydro-2,6-dideoxy-alpha-D-glucose + NADP(+) = dTDP-3,4-didehydro-2,6-dideoxy-alpha-D-glucose + NADPH + H(+). It participates in antibiotic biosynthesis. In terms of biological role, involved in the biosynthesis of L-digitoxose, an unusual dideoxysugar attached to various pharmacologically active natural products, including the antitumor antibiotic tetrocarcin A, and the antibiotics kijanimicin and jadomycin B. Catalyzes the reduction of the C-3 keto moiety of dTDP-3,4-diketo-2,6-dideoxy-alpha-D-glucose to yield dTDP-4-keto-2,6-dideoxy-alpha-D-glucose. Also able to reduce dTDP-3-keto-6-deoxy-D-galactose and dTDP-3-keto-6-deoxy-D-glucose to yield dTDP-fucose and dTDP-quinovose, respectively. This Actinomadura kijaniata protein is dTDP-3,4-didehydro-2,6-dideoxy-alpha-D-glucose 3-reductase.